Consider the following 654-residue polypeptide: WD repeat-containing protein 70 (654 aa).

2 disordered regions span residues 1–26 (MERSGPSEVTGSDASGPDPQLAVTMG) and 43–175 (FEQT…DSHE). A compositionally biased stretch (basic and acidic residues) spans 45-78 (QTRRTAVERSRKTLEAREKEEEMNREKELRRQNE). A compositionally biased stretch (low complexity) spans 99–111 (RDTSSSESEQSSD). Acidic residues predominate over residues 147-164 (NEEEEEAEEEEEEEEEEE). Residues 165–175 (NPVHKIPDSHE) are compositionally biased toward basic and acidic residues. WD repeat units follow at residues 180–219 (HGTKTVSALGLDPSGARLVTGGYDYDVKFWDFAGMDASFK), 227–268 (CECH…ECIK), 281–321 (GHTA…KQKS), 330–369 (GKKVIPTTCTYSRDGNLIAAACQNGSIQIWDRNLTVHPKF), 376–415 (DSGTDTSCVTFSYDGNVLASRGGDDSLKLWDIRQFNKPLF), 421–466 (PTMF…RVYE), and 469–508 (ITDASVVRCLWHPKLNQIMVGTGNGLAKVYYDPNKSQRGA). Lysine 296 is covalently cross-linked (Glycyl lysine isopeptide (Lys-Gly) (interchain with G-Cter in SUMO2)). Lysine 452 carries the N6-acetyllysine modification. Positions 540-565 (REPRQRSTRKQLEKDRLDPLKSHKPE) are enriched in basic and acidic residues. The segment at 540-579 (REPRQRSTRKQLEKDRLDPLKSHKPEPPVAGPGRGGRVGT) is disordered. Threonine 579 carries the post-translational modification Phosphothreonine. Glycyl lysine isopeptide (Lys-Gly) (interchain with G-Cter in SUMO2) cross-links involve residues lysine 590 and lysine 596. Residues serine 621 and serine 638 each carry the phosphoserine modification. The disordered stretch occupies residues 630-654 (KTMFAQVESDDEEAKNEPEWKKRKI). Residues 644 to 654 (KNEPEWKKRKI) are compositionally biased toward basic and acidic residues.

This sequence belongs to the WD repeat GAD-1 family.

This Homo sapiens (Human) protein is WD repeat-containing protein 70 (WDR70).